Consider the following 322-residue polypeptide: tRNA U34 carboxymethyltransferase (322 aa).

Residues Lys-92, Trp-106, Lys-111, Gly-131, 153–155 (DPT), 181–182 (VE), Met-196, Tyr-200, and Arg-315 contribute to the carboxy-S-adenosyl-L-methionine site.

This sequence belongs to the class I-like SAM-binding methyltransferase superfamily. CmoB family. Homotetramer.

It catalyses the reaction carboxy-S-adenosyl-L-methionine + 5-hydroxyuridine(34) in tRNA = 5-carboxymethoxyuridine(34) in tRNA + S-adenosyl-L-homocysteine + H(+). In terms of biological role, catalyzes carboxymethyl transfer from carboxy-S-adenosyl-L-methionine (Cx-SAM) to 5-hydroxyuridine (ho5U) to form 5-carboxymethoxyuridine (cmo5U) at position 34 in tRNAs. The protein is tRNA U34 carboxymethyltransferase of Colwellia psychrerythraea (strain 34H / ATCC BAA-681) (Vibrio psychroerythus).